The primary structure comprises 293 residues: AKT-interacting protein (293 aa).

The segment covering 1 to 11 (MNPFWSMSTNA) has biased composition (polar residues). Residues 1 to 44 (MNPFWSMSTNAGRKRSDGEEQSGSGEQRASPARPPFGKKQLPSI) form a disordered region. The UBC core domain maps to 75-223 (YLEYSLLAEF…VVDSVKLCNS (149 aa)). Positions 260–293 (RPEDFNKGLPVSGLSWVKPGSTQPFSKEDNPLQT) are disordered.

It belongs to the ubiquitin-conjugating enzyme family. FTS subfamily.

It is found in the cytoplasm. Its subcellular location is the cell membrane. Functionally, may function to promote vesicle trafficking and/or fusion. May also regulate apoptosis. The chain is AKT-interacting protein (aktip) from Danio rerio (Zebrafish).